A 410-amino-acid polypeptide reads, in one-letter code: Tryptophan synthase beta chain (410 aa).

Residue Lys-98 is modified to N6-(pyridoxal phosphate)lysine.

It belongs to the TrpB family. In terms of assembly, tetramer of two alpha and two beta chains. Pyridoxal 5'-phosphate serves as cofactor.

The catalysed reaction is (1S,2R)-1-C-(indol-3-yl)glycerol 3-phosphate + L-serine = D-glyceraldehyde 3-phosphate + L-tryptophan + H2O. The protein operates within amino-acid biosynthesis; L-tryptophan biosynthesis; L-tryptophan from chorismate: step 5/5. Its function is as follows. The beta subunit is responsible for the synthesis of L-tryptophan from indole and L-serine. The protein is Tryptophan synthase beta chain of Dinoroseobacter shibae (strain DSM 16493 / NCIMB 14021 / DFL 12).